Here is a 64-residue protein sequence, read N- to C-terminus: Large ribosomal subunit protein bL32 (64 aa).

Residues 1–15 (MAVPKRKVSKSRRDS) are compositionally biased toward basic residues. Positions 1 to 21 (MAVPKRKVSKSRRDSRRAQTF) are disordered.

Belongs to the bacterial ribosomal protein bL32 family.

The polypeptide is Large ribosomal subunit protein bL32 (Symbiobacterium thermophilum (strain DSM 24528 / JCM 14929 / IAM 14863 / T)).